Here is a 471-residue protein sequence, read N- to C-terminus: MTDLPDSTRWQLWIVAFGFFMQSLDTTIVNTAIPSMAQSLGESPLHMHMVIVSYVLTVAVMLPASGWLADKVGVRNIFFTAIVLFTLGSLFCALSGTLNELLLARALQGVGGAMMVPVGRLTVMKIVPREQYMAAMTFVTLPGQVGPLLGPALGGLLVEYASWHWIFLINIPVGIIGAIATLMLMPNYTMQTRRFDLSGFLLLAVGMAVLTLALDGSKGTGLSPLAIAGLVAVGVVALVLYLLHARNNNRALFSLKLFRTRTFSLGLAGSFAGRIGSGMLPFMTPVFLQIGLGFSPFHAGLMMIPMVLGSMGMKRIVVQVVNRFGYRRVLVATTLGLSLVTLLFMTTALLGWYYVLPFVLFLQGMVNSTRFSSMNTLTLKDLPDNLASSGNSLLSMIMQLSMSIGVTIAGLLLGLFGSQHVSVDSGTTQTVFMYTWLSMAFIIALPAFIFARVPNDTHQNVAISRRKRSAQ.

At 1–12 (MTDLPDSTRWQL) the chain is on the periplasmic side. The chain crosses the membrane as a helical span at residues 13 to 33 (WIVAFGFFMQSLDTTIVNTAI). Topologically, residues 34–48 (PSMAQSLGESPLHMH) are cytoplasmic. The helical transmembrane segment at 49 to 69 (MVIVSYVLTVAVMLPASGWLA) threads the bilayer. At 70–76 (DKVGVRN) the chain is on the periplasmic side. A helical transmembrane segment spans residues 77–97 (IFFTAIVLFTLGSLFCALSGT). Residues 98 to 101 (LNEL) lie on the Cytoplasmic side of the membrane. A helical transmembrane segment spans residues 102–124 (LLARALQGVGGAMMVPVGRLTVM). Topologically, residues 125–137 (KIVPREQYMAAMT) are periplasmic. The chain crosses the membrane as a helical span at residues 138–158 (FVTLPGQVGPLLGPALGGLLV). Residues 159 to 164 (EYASWH) lie on the Cytoplasmic side of the membrane. The helical transmembrane segment at 165 to 185 (WIFLINIPVGIIGAIATLMLM) threads the bilayer. Residues 186 to 196 (PNYTMQTRRFD) lie on the Periplasmic side of the membrane. A helical transmembrane segment spans residues 197-217 (LSGFLLLAVGMAVLTLALDGS). Residues 218-224 (KGTGLSP) are Cytoplasmic-facing. Residues 225-245 (LAIAGLVAVGVVALVLYLLHA) form a helical membrane-spanning segment. Over 246–262 (RNNNRALFSLKLFRTRT) the chain is Periplasmic. The helical transmembrane segment at 263–283 (FSLGLAGSFAGRIGSGMLPFM) threads the bilayer. At 284-285 (TP) the chain is on the cytoplasmic side. The helical transmembrane segment at 286–306 (VFLQIGLGFSPFHAGLMMIPM) threads the bilayer. Topologically, residues 307-341 (VLGSMGMKRIVVQVVNRFGYRRVLVATTLGLSLVT) are periplasmic. A helical transmembrane segment spans residues 342–362 (LLFMTTALLGWYYVLPFVLFL). Residues 363–395 (QGMVNSTRFSSMNTLTLKDLPDNLASSGNSLLS) are Cytoplasmic-facing. A helical transmembrane segment spans residues 396–416 (MIMQLSMSIGVTIAGLLLGLF). Residues 417-430 (GSQHVSVDSGTTQT) are Periplasmic-facing. A helical membrane pass occupies residues 431 to 451 (VFMYTWLSMAFIIALPAFIFA). The Cytoplasmic segment spans residues 452–471 (RVPNDTHQNVAISRRKRSAQ).

The protein belongs to the major facilitator superfamily. TCR/Tet family.

The protein localises to the cell inner membrane. The polypeptide is Putative multidrug resistance protein MdtD (Shigella flexneri serotype 5b (strain 8401)).